Here is a 204-residue protein sequence, read N- to C-terminus: Terpene cyclase ausL (204 aa).

Transmembrane regions (helical) follow at residues Leu19–Val39, Ala49–Tyr69, His75–Leu95, Leu114–Leu134, and Gly138–Val158.

The protein belongs to the paxB family.

The protein localises to the membrane. The protein operates within secondary metabolite biosynthesis; terpenoid biosynthesis. Its function is as follows. Terpene cyclase; part of the gene cluster B that mediates the biosynthesis of austinol and dehydroaustinol, two fungal meroterpenoids. The first step of the pathway is the synthesis of 3,5-dimethylorsellinic acid by the polyketide synthase ausA. 3,5-dimethylorsellinic acid is then prenylated by the polyprenyl transferase ausN. Further epoxidation by the FAD-dependent monooxygenase ausM and cyclization by the probable terpene cyclase ausL lead to the formation of protoaustinoid A. Protoaustinoid A is then oxidized to spiro-lactone preaustinoid A3 by the combined action of the FAD-binding monooxygenases ausB and ausC, and the dioxygenase ausE. Acid-catalyzed keto-rearrangement and ring contraction of the tetraketide portion of preaustinoid A3 by ausJ lead to the formation of preaustinoid A4. The aldo-keto reductase ausK, with the help of ausH, is involved in the next step by transforming preaustinoid A4 into isoaustinone which is in turn hydroxylated by the P450 monooxygenase ausI to form austinolide. Finally, the cytochrome P450 monooxygenase ausG modifies austinolide to austinol. Austinol can be further modified to dehydroaustinol which forms a diffusible complex with diorcinol that initiates conidiation. Due to genetic rearrangements of the clusters and the subsequent loss of some enzymes, the end products of the Emericella nidulans austinoid biosynthesis clusters are austinol and dehydroaustinol, even if additional enzymes, such as the O-acetyltransferase ausQ and the cytochrome P450 monooxygenase ausR are still functional. The chain is Terpene cyclase ausL from Emericella nidulans (strain FGSC A4 / ATCC 38163 / CBS 112.46 / NRRL 194 / M139) (Aspergillus nidulans).